Reading from the N-terminus, the 251-residue chain is Methionine aminopeptidase (251 aa).

His-76 lines the substrate pocket. Residues Asp-93, Asp-104, and His-168 each contribute to the a divalent metal cation site. A substrate-binding site is contributed by His-175. Residues Glu-202 and Glu-233 each contribute to the a divalent metal cation site.

Belongs to the peptidase M24A family. Methionine aminopeptidase type 1 subfamily. Monomer. It depends on Co(2+) as a cofactor. Requires Zn(2+) as cofactor. Mn(2+) serves as cofactor. Fe(2+) is required as a cofactor.

The catalysed reaction is Release of N-terminal amino acids, preferentially methionine, from peptides and arylamides.. In terms of biological role, removes the N-terminal methionine from nascent proteins. The N-terminal methionine is often cleaved when the second residue in the primary sequence is small and uncharged (Met-Ala-, Cys, Gly, Pro, Ser, Thr, or Val). Requires deformylation of the N(alpha)-formylated initiator methionine before it can be hydrolyzed. The chain is Methionine aminopeptidase from Staphylococcus epidermidis (strain ATCC 35984 / DSM 28319 / BCRC 17069 / CCUG 31568 / BM 3577 / RP62A).